Here is a 452-residue protein sequence, read N- to C-terminus: Alkane uptake protein A (452 aa).

The signal sequence occupies residues 1 to 36 (MSERSVYMVLSPRFSVRAVSLAVAAVSASLSMPTSA).

This sequence belongs to the OmpP1/FadL family. Interacts with the inner membrane protein AupB.

It localises to the cell outer membrane. Required for growth on alkanes. Probably involved in the uptake of micelle-solubilized alkanes. This Marinobacter nauticus (strain ATCC 49840 / DSM 8798 / CIP 103578 / SP17) (Marinobacter hydrocarbonoclasticus) protein is Alkane uptake protein A.